A 486-amino-acid polypeptide reads, in one-letter code: Ribulose bisphosphate carboxylase large chain (486 aa).

N126 and T176 together coordinate substrate. Catalysis depends on K178, which acts as the Proton acceptor. Residue K180 coordinates substrate. Positions 204, 206, and 207 each coordinate Mg(2+). Position 204 is an N6-carboxylysine (K204). The active-site Proton acceptor is H296. The substrate site is built by R297, H329, and S381.

Belongs to the RuBisCO large chain family. Type I subfamily. Heterohexadecamer of 8 large chains and 8 small chains. It depends on Mg(2+) as a cofactor.

The catalysed reaction is 2 (2R)-3-phosphoglycerate + 2 H(+) = D-ribulose 1,5-bisphosphate + CO2 + H2O. It catalyses the reaction D-ribulose 1,5-bisphosphate + O2 = 2-phosphoglycolate + (2R)-3-phosphoglycerate + 2 H(+). In terms of biological role, ruBisCO catalyzes two reactions: the carboxylation of D-ribulose 1,5-bisphosphate, the primary event in carbon dioxide fixation, as well as the oxidative fragmentation of the pentose substrate. Both reactions occur simultaneously and in competition at the same active site. This Methylacidiphilum infernorum (isolate V4) (Methylokorus infernorum (strain V4)) protein is Ribulose bisphosphate carboxylase large chain.